A 61-amino-acid chain; its full sequence is MGRADTPRHPPPPAAGFGVHRGAFLIPVALRVLLAGRTPRPFTPGLADPRRLGPRRVQAAQ.

The interval 38–61 (TPRPFTPGLADPRRLGPRRVQAAQ) is disordered.

This is an uncharacterized protein from Homo sapiens (Human).